We begin with the raw amino-acid sequence, 349 residues long: uncharacterized protein (349 aa).

Residues 221 to 241 (AFVVWIGSGLNIIWWTGIVLL) traverse the membrane as a helical segment. Residues 328-339 (VASAPPAVPSQP) are compositionally biased toward pro residues. The segment at 328 to 349 (VASAPPAVPSQPPEYSSVFPPV) is disordered.

Its subcellular location is the host membrane. This is an uncharacterized protein from Human cytomegalovirus (strain Merlin) (HHV-5).